The primary structure comprises 390 residues: Lipoyl synthase, mitochondrial (390 aa).

Residues 1 to 18 constitute a mitochondrion transit peptide; sequence MALYRAPKLQRSLLNRCL. [4Fe-4S] cluster-binding residues include Cys99, Cys104, Cys110, Cys137, Cys141, Cys144, and Ser351. In terms of domain architecture, Radical SAM core spans 120–340; that stretch reads AEGRSAATAT…KQVAEDLGFL (221 aa).

This sequence belongs to the radical SAM superfamily. Lipoyl synthase family. [4Fe-4S] cluster is required as a cofactor.

It localises to the mitochondrion. The catalysed reaction is [[Fe-S] cluster scaffold protein carrying a second [4Fe-4S](2+) cluster] + N(6)-octanoyl-L-lysyl-[protein] + 2 oxidized [2Fe-2S]-[ferredoxin] + 2 S-adenosyl-L-methionine + 4 H(+) = [[Fe-S] cluster scaffold protein] + N(6)-[(R)-dihydrolipoyl]-L-lysyl-[protein] + 4 Fe(3+) + 2 hydrogen sulfide + 2 5'-deoxyadenosine + 2 L-methionine + 2 reduced [2Fe-2S]-[ferredoxin]. The protein operates within protein modification; protein lipoylation via endogenous pathway; protein N(6)-(lipoyl)lysine from octanoyl-[acyl-carrier-protein]: step 2/2. Its function is as follows. Catalyzes the radical-mediated insertion of two sulfur atoms into the C-6 and C-8 positions of the octanoyl moiety bound to the lipoyl domains of lipoate-dependent enzymes, thereby converting the octanoylated domains into lipoylated derivatives. The chain is Lipoyl synthase, mitochondrial from Coprinopsis cinerea (strain Okayama-7 / 130 / ATCC MYA-4618 / FGSC 9003) (Inky cap fungus).